Reading from the N-terminus, the 300-residue chain is NADH-cytochrome b5 reductase 1 (300 aa).

Residues 8–28 (PLVVFATVATIIISFVTLYFF) traverse the membrane as a helical segment. Over residues 34 to 45 (SSTTSSSSSSSS) the composition is skewed to low complexity. Positions 34–54 (SSTTSSSSSSSSKSKKGSPAL) are disordered. The FAD-binding FR-type domain maps to 57 to 160 (DKFQKFPLIS…RGPKGFFTYT (104 aa)). Residues 140–155 (AEKQVGDFVEIRGPKG) and 166–198 (SLGLIAGGTGIAPMYQIITAIMNNPEDKTKVHL) each bind FAD.

Belongs to the flavoprotein pyridine nucleotide cytochrome reductase family. Monomer. Component of the 2-(3-amino-3-carboxypropyl)histidine synthase complex composed of DPH1, DPH2, DPH3 and a NADH-dependent reductase, predominantly CBR1. Requires FAD as cofactor.

It localises to the mitochondrion outer membrane. It catalyses the reaction 2 Fe(III)-[cytochrome b5] + NADH = 2 Fe(II)-[cytochrome b5] + NAD(+) + H(+). The catalysed reaction is 2 Fe(3+)-[Dph3] + NADH = 2 Fe(2+)-[Dph3] + NAD(+) + H(+). The protein operates within protein modification; peptidyl-diphthamide biosynthesis. NADH-dependent reductase for DPH3 and cytochrome b5. Required for the first step of diphthamide biosynthesis, a post-translational modification of histidine which occurs in elongation factor 2. DPH1 and DPH2 transfer a 3-amino-3-carboxypropyl (ACP) group from S-adenosyl-L-methionine (SAM) to a histidine residue, the reaction is assisted by a reduction system comprising DPH3 and a NADH-dependent reductase, predominantly CBR1. By reducing DPH3, also involved in the formation of the tRNA wobble base modification mcm5s 2U (5-methoxycarbonylmethyl-2-thiouridine), mediated by the elongator complex. The cytochrome b5/NADH cytochrome b5 reductase electron transfer system supports the catalytic activity of several sterol biosynthetic enzymes. In Lodderomyces elongisporus (strain ATCC 11503 / CBS 2605 / JCM 1781 / NBRC 1676 / NRRL YB-4239) (Yeast), this protein is NADH-cytochrome b5 reductase 1 (CBR1).